We begin with the raw amino-acid sequence, 49 residues long: Splenin (49 aa).

The LEM-like domain maps to 4 to 47; it reads LEDPSVLTKEKLKSELVANNVTLPAGEQRKEVYVELYLQHLTAL. Residues 32–36 form an essential for biological activity region; it reads RKEVY.

This sequence belongs to the thymopoietin family.

Hormone of the spleen with pleiotropic actions on prothymocytes, mature T-cells, the nicotinic acetylcholine receptor, and pituitary corticotrophs. This chain is Splenin (SP), found in Bos taurus (Bovine).